We begin with the raw amino-acid sequence, 292 residues long: Cyclin-dependent kinase 5 (292 aa).

Residues 4–286 form the Protein kinase domain; the sequence is YEKLEKIGEG…AEEALQHPYF (283 aa). Residues 10–18 and Lys-33 each bind ATP; that span reads IGEGTYGTV. At Tyr-15 the chain carries Phosphotyrosine; by ABL1, EPHA4 and FYN. Position 17 is a phosphothreonine (Thr-17). Position 56 is an N6-acetyllysine (Lys-56). Ser-72 is modified (phosphoserine). Catalysis depends on Asp-126, which acts as the Proton acceptor. Position 159 is a phosphoserine (Ser-159).

It belongs to the protein kinase superfamily. CMGC Ser/Thr protein kinase family. CDC2/CDKX subfamily. In terms of assembly, heterodimer composed of a catalytic subunit CDK5 and a regulatory subunit CDK5R1 (p25) and macromolecular complex composed of at least CDK5, CDK5R1 (p35) and CDK5RAP1 or CDK5RAP2 or CDK5RAP3. Only the heterodimer shows kinase activity. Under neurotoxic stress and neuronal injury conditions, p35 is cleaved by calpain to generate p25 that hyperactivates CDK5, that becomes functionally disabled and often toxic. Found in a trimolecular complex with CABLES1 and ABL1. Interacts with CABLES1 and CABLES2. Interacts with AATK and GSTP1. Binds to HDAC1 when in complex with p25. Interaction with myristoylation p35 promotes CDK5 association with membranes. Both isoforms 1 and 2 interacts with beta-catenin/CTNNB1. Interacts with delta-catenin/CTNND2 and APEX1. Interacts with P53/TP53 in neurons. Interacts with PTK2/FAK1. Interacts with EPHA4; may mediate the activation of NGEF by EPHA4. The complex p35/CDK5 interacts with CLOCK. Interacts with HTR6. Phosphorylation on Tyr-15 by ABL1 and FYN, and on Ser-159 by casein kinase 1 promotes kinase activity. By contrast, phosphorylation at Thr-14 inhibits activity. In terms of processing, phosphorylation at Ser-159 is essential for maximal catalytic activity. In terms of tissue distribution, expressed in hippocampal neuronal synaptic termini (at protein level). Expressed predominantly in post-mitotic neurons of the central and peripheral nervous system.

Its subcellular location is the cytoplasm. The protein resides in the nucleus. It localises to the cell membrane. The protein localises to the perikaryon. It is found in the cell projection. Its subcellular location is the lamellipodium. The protein resides in the growth cone. It localises to the postsynaptic density. The protein localises to the synapse. The catalysed reaction is L-seryl-[protein] + ATP = O-phospho-L-seryl-[protein] + ADP + H(+). The enzyme catalyses L-threonyl-[protein] + ATP = O-phospho-L-threonyl-[protein] + ADP + H(+). Inhibited by 2-(1-ethyl-2-hydroxyethylamino)-6-benzylamino-9-isopropylpurine (roscovitine), 1-isopropyl-4-aminobenzyl-6-ether-linked benzimidazoles, resveratrol, AT-7519 and olomoucine. Activated by CDK5R1 (p35) and CDK5R2 (p39) during the development of the nervous system; degradation of CDK5R1 (p35) and CDK5R2 (p39) by proteasome result in down regulation of kinase activity, during this process, CDK5 phosphorylates p35 and induces its ubiquitination and subsequent degradation. Kinase activity is mainly determined by the amount of p35 available and subcellular location; reversible association to plasma membrane inhibits activity. Long-term inactivation as well as CDK5R1 (p25)-mediated hyperactivation of CDK5 triggers cell death. The pro-death activity of hyperactivated CDK5 is suppressed by membrane association of CDK5, via myristoylation of p35. Brain-derived neurotrophic factor, glial-derived neurotrophic factor, nerve growth factor (NGF), retinoic acid, laminin and neuregulin promote activity. Neurotoxicity enhances nuclear activity, thus leading to MEF2 phosphorylation and inhibition prior to apoptosis of cortical neurons. Repression by GSTP1 via p25/p35 translocation prevents neurodegeneration. Functionally, proline-directed serine/threonine-protein kinase essential for neuronal cell cycle arrest and differentiation and may be involved in apoptotic cell death in neuronal diseases by triggering abortive cell cycle re-entry. Interacts with D1 and D3-type G1 cyclins. Phosphorylates SRC, NOS3, VIM/vimentin, p35/CDK5R1, MEF2A, SIPA1L1, SH3GLB1, PXN, PAK1, MCAM/MUC18, SEPT5, SYN1, DNM1, AMPH, SYNJ1, CDK16, RAC1, RHOA, CDC42, TONEBP/NFAT5, MAPT/TAU, MAP1B, histone H1, p53/TP53, HDAC1, APEX1, PTK2/FAK1, huntingtin/HTT, ATM, MAP2, NEFH and NEFM. Regulates several neuronal development and physiological processes including neuronal survival, migration and differentiation, axonal and neurite growth, synaptogenesis, oligodendrocyte differentiation, synaptic plasticity and neurotransmission, by phosphorylating key proteins. Negatively regulates the CACNA1B/CAV2.2 -mediated Ca(2+) release probability at hippocampal neuronal soma and synaptic terminals. Activated by interaction with CDK5R1 (p35) and CDK5R2 (p39), especially in postmitotic neurons, and promotes CDK5R1 (p35) expression in an autostimulation loop. Phosphorylates many downstream substrates such as Rho and Ras family small GTPases (e.g. PAK1, RAC1, RHOA, CDC42) or microtubule-binding proteins (e.g. MAPT/TAU, MAP2, MAP1B), and modulates actin dynamics to regulate neurite growth and/or spine morphogenesis. Also phosphorylates exocytosis associated proteins such as MCAM/MUC18, SEPT5, SYN1, and CDK16/PCTAIRE1 as well as endocytosis associated proteins such as DNM1, AMPH and SYNJ1 at synaptic terminals. In the mature central nervous system (CNS), regulates neurotransmitter movements by phosphorylating substrates associated with neurotransmitter release and synapse plasticity; synaptic vesicle exocytosis, vesicles fusion with the presynaptic membrane, and endocytosis. Promotes cell survival by activating anti-apoptotic proteins BCL2 and STAT3, and negatively regulating of JNK3/MAPK10 activity. Phosphorylation of p53/TP53 in response to genotoxic and oxidative stresses enhances its stabilization by preventing ubiquitin ligase-mediated proteasomal degradation, and induces transactivation of p53/TP53 target genes, thus regulating apoptosis. Phosphorylation of p35/CDK5R1 enhances its stabilization by preventing calpain-mediated proteolysis producing p25/CDK5R1 and avoiding ubiquitin ligase-mediated proteasomal degradation. During aberrant cell-cycle activity and DNA damage, p25/CDK5 activity elicits cell-cycle activity and double-strand DNA breaks that precedes neuronal death by deregulating HDAC1. DNA damage triggered phosphorylation of huntingtin/HTT in nuclei of neurons protects neurons against polyglutamine expansion as well as DNA damage mediated toxicity. Phosphorylation of PXN reduces its interaction with PTK2/FAK1 in matrix-cell focal adhesions (MCFA) during oligodendrocytes (OLs) differentiation. Negative regulator of Wnt/beta-catenin signaling pathway. Activator of the GAIT (IFN-gamma-activated inhibitor of translation) pathway, which suppresses expression of a post-transcriptional regulon of proinflammatory genes in myeloid cells; phosphorylates the linker domain of glutamyl-prolyl tRNA synthetase (EPRS) in a IFN-gamma-dependent manner, the initial event in assembly of the GAIT complex. Phosphorylation of SH3GLB1 is required for autophagy induction in starved neurons. Phosphorylation of TONEBP/NFAT5 in response to osmotic stress mediates its rapid nuclear localization. MEF2 is inactivated by phosphorylation in nucleus in response to neurotoxin, thus leading to neuronal apoptosis. APEX1 AP-endodeoxyribonuclease is repressed by phosphorylation, resulting in accumulation of DNA damage and contributing to neuronal death. NOS3 phosphorylation down regulates NOS3-derived nitrite (NO) levels. SRC phosphorylation mediates its ubiquitin-dependent degradation and thus leads to cytoskeletal reorganization. May regulate endothelial cell migration and angiogenesis via the modulation of lamellipodia formation. Involved in dendritic spine morphogenesis by mediating the EFNA1-EPHA4 signaling. The complex p35/CDK5 participates in the regulation of the circadian clock by modulating the function of CLOCK protein: phosphorylates CLOCK at 'Thr-451' and 'Thr-461' and regulates the transcriptional activity of the CLOCK-BMAL1 heterodimer in association with altered stability and subcellular distribution. In Rattus norvegicus (Rat), this protein is Cyclin-dependent kinase 5.